The chain runs to 44 residues: Putative protein PsbN (44 aa).

Residues 3–23 traverse the membrane as a helical segment; it reads IISFLSTIFLGFFIISTTIYS.

This sequence belongs to the PsbN family.

Its subcellular location is the plastid. The protein localises to the chloroplast thylakoid membrane. Its function is as follows. May play a role in photosystem I and II biogenesis. In Euglena gracilis, this protein is Putative protein PsbN.